The primary structure comprises 506 residues: Maturase K (506 aa).

Belongs to the intron maturase 2 family. MatK subfamily.

It localises to the plastid. Its subcellular location is the chloroplast. Usually encoded in the trnK tRNA gene intron. Probably assists in splicing its own and other chloroplast group II introns. This chain is Maturase K, found in Lathyrus sativus (White vetchling).